The following is a 723-amino-acid chain: Polyribonucleotide nucleotidyltransferase (723 aa).

Mg(2+) contacts are provided by D488 and D494. Residues 555-614 (PKIITLNIKPEKIKDVIGPGGKQINAIIDETGVKIDIEQDGTVYIASQDQAMNRKAIAII) form the KH domain. Residues 624-692 (GEVYTGKVRR…QQGRVNLSRK (69 aa)) form the S1 motif domain. Positions 692–723 (KALLEKKEQPEGDKKPQAEKKFYPKTKKPESK) are disordered. Positions 693–723 (ALLEKKEQPEGDKKPQAEKKFYPKTKKPESK) are enriched in basic and acidic residues.

Belongs to the polyribonucleotide nucleotidyltransferase family. Mg(2+) serves as cofactor.

The protein resides in the cytoplasm. The enzyme catalyses RNA(n+1) + phosphate = RNA(n) + a ribonucleoside 5'-diphosphate. Its function is as follows. Involved in mRNA degradation. Catalyzes the phosphorolysis of single-stranded polyribonucleotides processively in the 3'- to 5'-direction. In Listeria monocytogenes serotype 4a (strain HCC23), this protein is Polyribonucleotide nucleotidyltransferase.